Here is a 622-residue protein sequence, read N- to C-terminus: Cell pattern formation-associated protein stuA (622 aa).

Disordered regions lie at residues methionine 1–alanine 24 and tyrosine 62–serine 81. The HTH APSES-type domain maps to arginine 129 to proline 235. Residues glycine 163 to glutamate 184 constitute a DNA-binding region (H-T-H motif). Disordered stretches follow at residues asparagine 239 to arginine 517 and serine 549 to arginine 622. 3 stretches are compositionally biased toward polar residues: residues leucine 274 to serine 283, alanine 302 to methionine 345, and glycine 355 to tyrosine 370. Over residues proline 384–glutamine 395 the composition is skewed to low complexity. 4 stretches are compositionally biased toward polar residues: residues methionine 404–serine 421, serine 455–serine 470, glutamine 480–proline 506, and serine 549–serine 563. Positions lysine 565–lysine 590 are nuclear localization domain. A compositionally biased stretch (basic and acidic residues) spans arginine 566–threonine 586.

Belongs to the EFG1/PHD1/stuA family.

The protein resides in the nucleus. Functionally, transcription factor that regulates asexual reproduction. Binds the StuA-response elements (StRE) with the consensus sequence 5'-(A/T)CGCG(T/A)N(A/C)-3' at the promoters of target genes. Required from the very earliest events of asexual reproduction until completion of conidiophore development, but is not specifically required for differentiation of conidia. Represses transcription of the abaA developmental regulatory gene and of the developmentally regulated awh11 gene. Controls the expression of the catalase-peroxidase gene cpeA. Plays an important role in cell wall biogenesis during the development by controlling the transcription level of fksA. This Emericella nidulans (strain FGSC A4 / ATCC 38163 / CBS 112.46 / NRRL 194 / M139) (Aspergillus nidulans) protein is Cell pattern formation-associated protein stuA.